A 325-amino-acid polypeptide reads, in one-letter code: Apoptosis-enhancing nuclease (325 aa).

The Nucleolar localization signal signature appears at 27–35 (RKRHKRRSR). Residues 53 to 105 (LSMPPEPGSSPLPTPFGAVTATEDASSGKQCPRAGSGGAPCSRRPAPGKASGP) are disordered. The segment covering 56-66 (PPEPGSSPLPT) has biased composition (pro residues). In terms of domain architecture, Exonuclease spans 110–266 (CVAIDCEMVG…EDATTAMELY (157 aa)). Residues 165 to 188 (RQHMCKAIPFQVAQKEILKLLKGK) carry the Nuclear localization signal motif. The tract at residues 281–325 (LWTCPEDREPDSSTDMEQYMEDQYWPDDLAHGSRGGAREAQDRRN) is disordered. A compositionally biased stretch (basic and acidic residues) spans 308 to 325 (DLAHGSRGGAREAQDRRN).

The protein localises to the nucleus. It localises to the nucleolus. Functionally, exonuclease with activity against single- and double-stranded DNA and RNA. Mediates p53-induced apoptosis. When induced by p53 following DNA damage, digests double-stranded DNA to form single-stranded DNA and amplifies DNA damage signals, leading to enhancement of apoptosis. The protein is Apoptosis-enhancing nuclease (AEN) of Pongo abelii (Sumatran orangutan).